The primary structure comprises 1117 residues: WD repeat and HMG-box DNA-binding protein 1 (1117 aa).

WD repeat units lie at residues 11 to 50 (GHTE…DPKS), 52 to 91 (NVGE…GILT), 93 to 131 (FTTN…QQQT), 134 to 173 (GHDA…CAVS), 184 to 223 (VNAK…NPFD), 228 to 267 (SISQ…CMER), and 271 to 310 (EKGY…SGKV). Phosphoserine occurs at positions 333 and 377. Residue Lys-390 forms a Glycyl lysine isopeptide (Lys-Gly) (interchain with G-Cter in SUMO2) linkage. Lys-664 carries the N6-acetyllysine modification. Residues 816-885 (LAETQSEEEK…NLFQSANSSD (70 aa)) are disordered. Position 819 is a phosphothreonine (Thr-819). Ser-821 carries the post-translational modification Phosphoserine. Over residues 861–872 (DTVSEEKPESHN) the composition is skewed to basic and acidic residues. The span at 873–885 (HGQNLFQSANSSD) shows a compositional bias: polar residues. Phosphoserine occurs at positions 910 and 923. The disordered stretch occupies residues 911 to 1005 (SKEPAVSANS…AVCLQNSENQ (95 aa)). Polar residues predominate over residues 917–943 (SANSTRSANILDSMNKSSRKSTSLNRM). N6-acetyllysine is present on Lys-953. A compositionally biased stretch (polar residues) spans 962-974 (KQASAASYFQKRT). Positions 975 to 987 (PQADKTEEVKENP) are enriched in basic and acidic residues. A compositionally biased stretch (polar residues) spans 988–1004 (KSSSSDAPAVCLQNSEN). Positions 1004 to 1073 (NQRPKTGFQM…SDGAEAKKRK (70 aa)) form a DNA-binding region, HMG box. Ser-1030 carries the post-translational modification Phosphoserine. The segment at 1054-1074 (WTNKAKGETASDGAEAKKRKR) is disordered. A Glycyl lysine isopeptide (Lys-Gly) (interchain with G-Cter in SUMO1); alternate cross-link involves residue Lys-1116. Lys-1116 is covalently cross-linked (Glycyl lysine isopeptide (Lys-Gly) (interchain with G-Cter in SUMO2); alternate).

Trimer. Interacts with the polymerase alpha catalytic subunit POLA1. Interacts with MCM10. Interacts with DNA2. Interacts with CDC45 and GINS2 subunit of GINS complex; these interactions associate WDHD1 with the CMG helicase complex.

The protein localises to the nucleus. Its subcellular location is the nucleoplasm. Functionally, core replisome component that acts as a replication initiation factor. Binds directly to the CMG complex and functions as a hub to recruit additional proteins to the replication fork. The sequence is that of WD repeat and HMG-box DNA-binding protein 1 (Wdhd1) from Mus musculus (Mouse).